Reading from the N-terminus, the 384-residue chain is Outer membrane protein assembly factor BamB (384 aa).

Positions 1-21 (MKLTLKRKFIAVLALTSLLGA) are cleaved as a signal peptide. Residue C22 is the site of N-palmitoyl cysteine attachment. The S-diacylglycerol cysteine moiety is linked to residue C22.

The protein belongs to the BamB family. Part of the Bam complex.

The protein localises to the cell outer membrane. Functionally, part of the outer membrane protein assembly complex, which is involved in assembly and insertion of beta-barrel proteins into the outer membrane. The sequence is that of Outer membrane protein assembly factor BamB from Taylorella asinigenitalis (strain MCE3).